The primary structure comprises 398 residues: Substance-K receptor (398 aa).

At 1 to 32 (MGTCDIVTEANISSGPESNTTGITAFSMPSWQ) the chain is on the extracellular side. N-linked (GlcNAc...) asparagine glycans are attached at residues asparagine 11 and asparagine 19. A helical membrane pass occupies residues 33-56 (LALWATAYLALVLVAVTGNAIVIW). Residues 57-69 (IILAHRRMRTVTN) are Cytoplasmic-facing. Residues 70-90 (YFIVNLALADLCMAAFNAAFN) form a helical membrane-spanning segment. The Extracellular portion of the chain corresponds to 91 to 107 (FVYASHNIWYFGRAFCY). An intrachain disulfide couples cysteine 106 to cysteine 181. Residues 108 to 129 (FQNLFPITAMFVSIYSMTAIAA) traverse the membrane as a helical segment. Residues 130–149 (DRYMAIVHPFQPRLSAPSTK) are Cytoplasmic-facing. Residues 150–170 (AVIAGIWLVALALASPQCFYS) form a helical membrane-spanning segment. Residues 171-196 (TVTMDQGATKCVVAWPEDSGGKTLLL) lie on the Extracellular side of the membrane. Residues 197-218 (YHLVVIALIYFLPLAVMFVAYS) traverse the membrane as a helical segment. Residues 219–251 (VIGLTLWRRAVPGHQAHGANLRHLQAMKKFVKT) lie on the Cytoplasmic side of the membrane. A helical transmembrane segment spans residues 252–272 (MVLVVLTFAICWLPYHLYFIL). Over 273-290 (GSFQEDIYCHKFIQQVYL) the chain is Extracellular. Residues 291–310 (ALFWLAMSSTMYNPIIYCCL) traverse the membrane as a helical segment. The Cytoplasmic portion of the chain corresponds to 311 to 398 (NHRFRSGFRL…LAPTKTHVEI (88 aa)). A lipid anchor (S-palmitoyl cysteine) is attached at cysteine 324.

It belongs to the G-protein coupled receptor 1 family.

The protein localises to the cell membrane. This is a receptor for the tachykinin neuropeptide substance K (neurokinin A). It is associated with G proteins that activate a phosphatidylinositol-calcium second messenger system. The rank order of affinity of this receptor to tachykinins is: substance K &gt; neuromedin-K &gt; substance P. The protein is Substance-K receptor (TACR2) of Homo sapiens (Human).